The sequence spans 184 residues: GTP cyclohydrolase 1 (184 aa).

3 residues coordinate Zn(2+): C75, H78, and C146.

Belongs to the GTP cyclohydrolase I family. Toroid-shaped homodecamer, composed of two pentamers of five dimers.

It catalyses the reaction GTP + H2O = 7,8-dihydroneopterin 3'-triphosphate + formate + H(+). It functions in the pathway cofactor biosynthesis; 7,8-dihydroneopterin triphosphate biosynthesis; 7,8-dihydroneopterin triphosphate from GTP: step 1/1. The polypeptide is GTP cyclohydrolase 1 (Streptococcus sanguinis (strain SK36)).